A 261-amino-acid chain; its full sequence is Small ribosomal subunit protein uS2 (261 aa).

The protein belongs to the universal ribosomal protein uS2 family.

This is Small ribosomal subunit protein uS2 from Rhodospirillum centenum (strain ATCC 51521 / SW).